The primary structure comprises 422 residues: GTPase Obg (422 aa).

Residues 4–161 (LHFVDEAFNE…FKIKTELKVL (158 aa)) enclose the Obg domain. The region spanning 162-327 (ADIGLLGFPS…LKYEMSSLLQ (166 aa)) is the OBG-type G domain. GTP is bound by residues 168–175 (GFPSVGKS), 193–197 (FTTIK), 214–217 (DLPG), 281–284 (NKMD), and 308–310 (SLV). 2 residues coordinate Mg(2+): serine 175 and threonine 195. Positions 345–422 (TLPDNQNTIS…KICDRLFYFL (78 aa)) constitute an OCT domain.

The protein belongs to the TRAFAC class OBG-HflX-like GTPase superfamily. OBG GTPase family. As to quaternary structure, monomer. Requires Mg(2+) as cofactor.

It is found in the cytoplasm. Functionally, an essential GTPase which binds GTP, GDP and possibly (p)ppGpp with moderate affinity, with high nucleotide exchange rates and a fairly low GTP hydrolysis rate. Plays a role in control of the cell cycle, stress response, ribosome biogenesis and in those bacteria that undergo differentiation, in morphogenesis control. In Onion yellows phytoplasma (strain OY-M), this protein is GTPase Obg.